The following is a 300-amino-acid chain: Regulatory protein NocR (300 aa).

Positions 1 to 59 (MIQSRQLEAFRAVMLTGGMTSAANLVRITQPAISRLIRDLEEEIGISLFERTGNRLRPT) constitute an HTH lysR-type domain. The segment at residues 19 to 38 (MTSAANLVRITQPAISRLIR) is a DNA-binding region (H-T-H motif).

The protein belongs to the LysR transcriptional regulatory family.

Positive regulatory protein for the noc operon involved in nopaline catabolism and uptake. In Agrobacterium fabrum (strain C58 / ATCC 33970) (Agrobacterium tumefaciens (strain C58)), this protein is Regulatory protein NocR (nocR).